The following is a 261-amino-acid chain: 3-hydroxyacyl-CoA dehydrogenase type-2 (261 aa).

A2 carries the post-translational modification N-acetylalanine. The NAD(+) site is built by S20 and D41. Position 53 is an N6-acetyllysine; alternate (K53). The residue at position 53 (K53) is an N6-succinyllysine; alternate. An NAD(+)-binding site is contributed by V65. An N6-acetyllysine modification is found at K69. C91 is an NAD(+) binding site. K99 and K105 each carry N6-acetyllysine. K107 carries the N6-acetyllysine; alternate modification. Position 107 is an N6-succinyllysine; alternate (K107). S155 lines the substrate pocket. 4 residues coordinate NAD(+): Y168, K172, F201, and T203. Residue Y168 is the Proton acceptor of the active site. K212 bears the N6-acetyllysine; alternate mark. At K212 the chain carries N6-succinyllysine; alternate.

It belongs to the short-chain dehydrogenases/reductases (SDR) family. Homotetramer. Component of mitochondrial ribonuclease P, a complex composed of TRMT10C/MRPP1, HSD17B10/MRPP2 and PRORP/MRPP3. Interacts with TRMT10C/MRPP1; forming the MRPP1-MRPP2 subcomplex of the mitochondrial ribonuclease P complex.

The protein localises to the mitochondrion. The protein resides in the mitochondrion matrix. It localises to the mitochondrion nucleoid. It catalyses the reaction a (3S)-3-hydroxyacyl-CoA + NAD(+) = a 3-oxoacyl-CoA + NADH + H(+). The catalysed reaction is (2S,3S)-3-hydroxy-2-methylbutanoyl-CoA + NAD(+) = 2-methyl-3-oxobutanoyl-CoA + NADH + H(+). The enzyme catalyses testosterone + NAD(+) = androst-4-ene-3,17-dione + NADH + H(+). It carries out the reaction 5alpha-androstane-3alpha,17beta-diol + NAD(+) = 17beta-hydroxy-5alpha-androstan-3-one + NADH + H(+). It catalyses the reaction 17beta-estradiol + NAD(+) = estrone + NADH + H(+). The catalysed reaction is cholate + NAD(+) = 3alpha,12alpha-dihydroxy-7-oxo-5beta-cholanate + NADH + H(+). The enzyme catalyses (3S)-3-hydroxybutanoyl-CoA + NAD(+) = acetoacetyl-CoA + NADH + H(+). It carries out the reaction (3S)-hydroxyoctanoyl-CoA + NAD(+) = 3-oxooctanoyl-CoA + NADH + H(+). It catalyses the reaction (3S)-hydroxyhexadecanoyl-CoA + NAD(+) = 3-oxohexadecanoyl-CoA + NADH + H(+). The catalysed reaction is 17beta-hydroxy-5alpha-androstan-3-one + NAD(+) = 5alpha-androstan-3,17-dione + NADH + H(+). The enzyme catalyses 5alpha-pregnan-20beta-ol-3-one + NAD(+) = 5alpha-pregnane-3,20-dione + NADH + H(+). It carries out the reaction 3alpha-hydroxy-5alpha-pregnan-20-one + NAD(+) = 5alpha-pregnane-3,20-dione + NADH + H(+). It catalyses the reaction cortisone + NAD(+) = 17alpha-hydroxypregn-4-en-3,11,20-trione-21-al + NADH + H(+). The catalysed reaction is 11-dehydrocorticosterone + NAD(+) = pregn-4-ene-3,11,20,21-tetraone + NADH + H(+). The enzyme catalyses cortisol + NAD(+) = 11beta,17alpha-dihydroxypregn-4-ene-3,20,21-trione + NADH + H(+). It carries out the reaction chenodeoxycholate + NAD(+) = 7-oxolithocholate + NADH + H(+). It catalyses the reaction ursodeoxycholate + NAD(+) = 7-oxolithocholate + NADH + H(+). The catalysed reaction is 3beta,7beta-dihydroxy-5beta-cholan-24-oate + NAD(+) = 3beta-hydroxy-7-oxo-5beta-cholan-24-oate + NADH + H(+). The protein operates within amino-acid degradation; L-isoleucine degradation. It functions in the pathway lipid metabolism; fatty acid beta-oxidation. It participates in steroid metabolism. Its pathway is lipid metabolism; bile acid biosynthesis. Mitochondrial dehydrogenase involved in pathways of fatty acid, branched-chain amino acid and steroid metabolism. Acts as (S)-3-hydroxyacyl-CoA dehydrogenase in mitochondrial fatty acid beta-oxidation, a major degradation pathway of fatty acids. Catalyzes the third step in the beta-oxidation cycle, namely the reversible conversion of (S)-3-hydroxyacyl-CoA to 3-ketoacyl-CoA. Preferentially accepts straight medium- and short-chain acyl-CoA substrates with highest efficiency for (3S)-hydroxybutanoyl-CoA. Acts as 3-hydroxy-2-methylbutyryl-CoA dehydrogenase in branched-chain amino acid catabolic pathway. Catalyzes the oxidation of 3-hydroxy-2-methylbutanoyl-CoA into 2-methyl-3-oxobutanoyl-CoA, a step in isoleucine degradation pathway. Has hydroxysteroid dehydrogenase activity toward steroid hormones and bile acids. Catalyzes the oxidation of 3alpha-, 17beta-, 20beta- and 21-hydroxysteroids and 7alpha- and 7beta-hydroxy bile acids. Oxidizes allopregnanolone/brexanolone at the 3alpha-hydroxyl group, which is known to be critical for the activation of gamma-aminobutyric acid receptors (GABAARs) chloride channel. Has phospholipase C-like activity toward cardiolipin and its oxidized species. Likely oxidizes the 2'-hydroxyl in the head group of cardiolipin to form a ketone intermediate that undergoes nucleophilic attack by water and fragments into diacylglycerol, dihydroxyacetone and orthophosphate. Has higher affinity for cardiolipin with oxidized fatty acids and may degrade these species during the oxidative stress response to protect cells from apoptosis. By interacting with intracellular amyloid-beta, it may contribute to the neuronal dysfunction associated with Alzheimer disease (AD). Essential for structural and functional integrity of mitochondria. In terms of biological role, in addition to mitochondrial dehydrogenase activity, moonlights as a component of mitochondrial ribonuclease P, a complex that cleaves tRNA molecules in their 5'-ends. Together with TRMT10C/MRPP1, forms a subcomplex of the mitochondrial ribonuclease P, named MRPP1-MRPP2 subcomplex, which displays functions that are independent of the ribonuclease P activity. The MRPP1-MRPP2 subcomplex catalyzes the formation of N(1)-methylguanine and N(1)-methyladenine at position 9 (m1G9 and m1A9, respectively) in tRNAs; HSD17B10/MRPP2 acting as a non-catalytic subunit. The MRPP1-MRPP2 subcomplex also acts as a tRNA maturation platform: following 5'-end cleavage by the mitochondrial ribonuclease P complex, the MRPP1-MRPP2 subcomplex enhances the efficiency of 3'-processing catalyzed by ELAC2, retains the tRNA product after ELAC2 processing and presents the nascent tRNA to the mitochondrial CCA tRNA nucleotidyltransferase TRNT1 enzyme. Associates with mitochondrial DNA complexes at the nucleoids to initiate RNA processing and ribosome assembly. The protein is 3-hydroxyacyl-CoA dehydrogenase type-2 (Hsd17b10) of Mus musculus (Mouse).